The chain runs to 226 residues: ATP-dependent dethiobiotin synthetase BioD (226 aa).

13–18 is an ATP binding site; the sequence is DVGKTL. A Mg(2+)-binding site is contributed by threonine 17. Lysine 38 is a catalytic residue. ATP is bound by residues aspartate 55, 117–120, 177–178, 206–208, and glutamate 213; these read EGAG, NR, and PFV. Residues aspartate 55 and glutamate 117 each coordinate Mg(2+).

This sequence belongs to the dethiobiotin synthetase family. In terms of assembly, homodimer. It depends on Mg(2+) as a cofactor.

The protein resides in the cytoplasm. It carries out the reaction (7R,8S)-7,8-diammoniononanoate + CO2 + ATP = (4R,5S)-dethiobiotin + ADP + phosphate + 3 H(+). It functions in the pathway cofactor biosynthesis; biotin biosynthesis; biotin from 7,8-diaminononanoate: step 1/2. Its function is as follows. Catalyzes a mechanistically unusual reaction, the ATP-dependent insertion of CO2 between the N7 and N8 nitrogen atoms of 7,8-diaminopelargonic acid (DAPA, also called 7,8-diammoniononanoate) to form a ureido ring. The chain is ATP-dependent dethiobiotin synthetase BioD from Aeromonas hydrophila subsp. hydrophila (strain ATCC 7966 / DSM 30187 / BCRC 13018 / CCUG 14551 / JCM 1027 / KCTC 2358 / NCIMB 9240 / NCTC 8049).